A 164-amino-acid chain; its full sequence is CB1 cannabinoid receptor-interacting protein 1 (164 aa).

The protein belongs to the CNRIP family. As to quaternary structure, interacts with the cannabinoid receptor CNR1 (via C-terminus). Does not interact with cannabinoid receptor CNR2.

In terms of biological role, suppresses cannabinoid receptor CNR1-mediated tonic inhibition of voltage-gated calcium channels. In Rattus norvegicus (Rat), this protein is CB1 cannabinoid receptor-interacting protein 1 (Cnrip1).